A 236-amino-acid polypeptide reads, in one-letter code: Truncated formate dehydrogenase 2 (236 aa).

Residues 36–37, aspartate 57, 104–108, threonine 130, aspartate 156, and 185–188 each bind NAD(+); these read RI, PLHKD, and HISG.

It belongs to the D-isomer specific 2-hydroxyacid dehydrogenase family. FDH subfamily.

This Saccharomyces cerevisiae (strain ATCC 204508 / S288c) (Baker's yeast) protein is Truncated formate dehydrogenase 2.